Here is a 61-residue protein sequence, read N- to C-terminus: Putative antitoxin VapB21 (61 aa).

The protein belongs to the UPF0165 family.

Its function is as follows. Possibly the antitoxin component of a type II toxin-antitoxin (TA) system. Its cognate toxin is VapC21 (Potential). The protein is Putative antitoxin VapB21 (vapB21) of Archaeoglobus fulgidus (strain ATCC 49558 / DSM 4304 / JCM 9628 / NBRC 100126 / VC-16).